The chain runs to 428 residues: Adenylosuccinate synthetase (428 aa).

Residues 12–18 (GDEGKGK) and 40–42 (GHT) contribute to the GTP site. Residue D13 is the Proton acceptor of the active site. Mg(2+) contacts are provided by D13 and G40. Residues 13–16 (DEGK), 38–41 (NAGH), T128, R142, Q223, T238, and R302 each bind IMP. The active-site Proton donor is the H41. 298 to 304 (VTTGRPR) lines the substrate pocket. GTP contacts are provided by residues R304, 330–332 (KLD), and 413–415 (GVG).

It belongs to the adenylosuccinate synthetase family. In terms of assembly, homodimer. The cofactor is Mg(2+).

The protein resides in the cytoplasm. It catalyses the reaction IMP + L-aspartate + GTP = N(6)-(1,2-dicarboxyethyl)-AMP + GDP + phosphate + 2 H(+). It functions in the pathway purine metabolism; AMP biosynthesis via de novo pathway; AMP from IMP: step 1/2. Its function is as follows. Plays an important role in the de novo pathway of purine nucleotide biosynthesis. Catalyzes the first committed step in the biosynthesis of AMP from IMP. The sequence is that of Adenylosuccinate synthetase from Acidothermus cellulolyticus (strain ATCC 43068 / DSM 8971 / 11B).